The following is a 902-amino-acid chain: Mitochondrial aspartate-glutamate transporter AGC1 (902 aa).

Solcar repeat units lie at residues 528-614 (FDSL…MRNR), 622-710 (LSLF…LKKD), and 725-813 (LKTW…FKGF). A run of 6 helical transmembrane segments spans residues 534–554 (FSLG…IDFI), 591–611 (GPQL…NDFM), 622–642 (LSLF…VIFT), 681–702 (GLYN…IYFP), 731–751 (LTAG…FDVI), and 786–806 (FKGG…TLAA).

It belongs to the mitochondrial carrier (TC 2.A.29) family.

It is found in the mitochondrion inner membrane. Calcium-dependent mitochondrial aspartate and glutamate carrier. Transport of glutamate in mitochondria is required for mitochondrial transamination reactions and ornithine synthesis. Plays also a role in malate-aspartate NADH shuttle, which is critical for growth on acetate and fatty acids. The protein is Mitochondrial aspartate-glutamate transporter AGC1 (AGC1) of Saccharomyces cerevisiae (strain ATCC 204508 / S288c) (Baker's yeast).